Reading from the N-terminus, the 188-residue chain is Protein SSX1 (188 aa).

Disordered stretches follow at residues 1 to 22 (MNGD…EKRS) and 111 to 188 (IMPK…EDDE). The 64-residue stretch at 20-83 (KRSKAFDDIA…KQATDFQGND (64 aa)) folds into the KRAB-related domain. The span at 115 to 125 (KPAEDENDSKG) shows a compositional bias: basic and acidic residues. Ser-123 bears the Phosphoserine mark. Positions 153-170 (KRSGPKRGKHAWTHRLRE) are enriched in basic residues. Residues 179–188 (EISDPEEDDE) show a composition bias toward acidic residues.

Belongs to the SSX family. In terms of tissue distribution, expressed at high level in the testis. Expressed at low level in thyroid. Not detected in tonsil, colon, lung, spleen, prostate, kidney, striated and smooth muscles. Detected in rhabdomyosarcoma and fibrosarcoma cell lines. Not detected in mesenchymal and epithelial cell lines. Expressed in testis.

The protein resides in the cytoplasm. It localises to the cytoskeleton. The protein localises to the flagellum axoneme. Functionally, could act as a modulator of transcription. Plays a role in spermatogenesis. This is Protein SSX1 (SSX1) from Homo sapiens (Human).